The chain runs to 92 residues: Progonadoliberin-1 (92 aa).

The first 23 residues, 1–23, serve as a signal peptide directing secretion; it reads MKPIQKLLAGLILLTWCVEGCSS. A Pyrrolidone carboxylic acid modification is found at Gln24. Gly33 bears the Glycine amide mark.

Belongs to the GnRH family. Post-translationally, the precursor is cleaved by ACE, which removes the Gly-Lys-Arg peptide at the C-terminus, leading to mature hormone. The mature form of Gonadoliberin-1 is also cleaved and degraded by ACE.

The protein localises to the secreted. Its function is as follows. Stimulates the secretion of gonadotropins; it stimulates the secretion of both luteinizing and follicle-stimulating hormones. In Homo sapiens (Human), this protein is Progonadoliberin-1 (GNRH1).